We begin with the raw amino-acid sequence, 135 residues long: Large-conductance mechanosensitive channel (135 aa).

The next 2 helical transmembrane spans lie at 10–30 and 76–96; these read FAMR…AAFG and GVFI…FLAI.

This sequence belongs to the MscL family. In terms of assembly, homopentamer.

The protein resides in the cell inner membrane. Its function is as follows. Channel that opens in response to stretch forces in the membrane lipid bilayer. May participate in the regulation of osmotic pressure changes within the cell. The sequence is that of Large-conductance mechanosensitive channel from Cronobacter sakazakii (strain ATCC BAA-894) (Enterobacter sakazakii).